The chain runs to 1033 residues: Isoleucine--tRNA ligase 2 (1033 aa).

The 'HIGH' region signature appears at 47–57; the sequence is PTANGLPHVGH. The 'KMSKS' region motif lies at 590 to 594; sequence KMSKS. ATP is bound at residue Lys593.

Belongs to the class-I aminoacyl-tRNA synthetase family. IleS type 2 subfamily. As to quaternary structure, monomer. Requires Zn(2+) as cofactor.

Its subcellular location is the cytoplasm. It carries out the reaction tRNA(Ile) + L-isoleucine + ATP = L-isoleucyl-tRNA(Ile) + AMP + diphosphate. Its function is as follows. Catalyzes the attachment of isoleucine to tRNA(Ile). As IleRS can inadvertently accommodate and process structurally similar amino acids such as valine, to avoid such errors it has two additional distinct tRNA(Ile)-dependent editing activities. One activity is designated as 'pretransfer' editing and involves the hydrolysis of activated Val-AMP. The other activity is designated 'posttransfer' editing and involves deacylation of mischarged Val-tRNA(Ile). The sequence is that of Isoleucine--tRNA ligase 2 from Bacillus cereus (strain ZK / E33L).